The chain runs to 89 residues: Neuropeptide S (89 aa).

Positions 1–23 (MIGSLKLSFVLALSLSVMHVLWC) are cleaved as a signal peptide. A propeptide spanning residues 24-69 (YPVLSSKVPGKPDYFLILLSSCPARLEGSDRLAFLKPILEKTSMKR) is cleaved from the precursor.

Its subcellular location is the secreted. Its function is as follows. May play an important anorexigenic role. Modulates arousal and anxiety as well as increases locomotor activity. Binds to its receptor NPSR1 with nanomolar affinity to increase intracellular calcium concentrations. This chain is Neuropeptide S (Nps), found in Mus musculus (Mouse).